A 491-amino-acid polypeptide reads, in one-letter code: Ketol-acid reductoisomerase (NADP(+)) (491 aa).

A KARI N-terminal Rossmann domain is found at Ile-16–Ser-207. NADP(+) contacts are provided by residues Cys-44–Gln-47, Lys-67, Ser-77, and Asp-107–Gln-109. His-131 is a catalytic residue. Gly-157 serves as a coordination point for NADP(+). 2 KARI C-terminal knotted domains span residues Ser-208 to Ser-344 and Tyr-345 to Met-484. The Mg(2+) site is built by Asp-216, Glu-220, Glu-389, and Glu-393. Ser-414 contributes to the substrate binding site.

Belongs to the ketol-acid reductoisomerase family. It depends on Mg(2+) as a cofactor.

It catalyses the reaction (2R)-2,3-dihydroxy-3-methylbutanoate + NADP(+) = (2S)-2-acetolactate + NADPH + H(+). The catalysed reaction is (2R,3R)-2,3-dihydroxy-3-methylpentanoate + NADP(+) = (S)-2-ethyl-2-hydroxy-3-oxobutanoate + NADPH + H(+). It functions in the pathway amino-acid biosynthesis; L-isoleucine biosynthesis; L-isoleucine from 2-oxobutanoate: step 2/4. The protein operates within amino-acid biosynthesis; L-valine biosynthesis; L-valine from pyruvate: step 2/4. Its function is as follows. Involved in the biosynthesis of branched-chain amino acids (BCAA). Catalyzes an alkyl-migration followed by a ketol-acid reduction of (S)-2-acetolactate (S2AL) to yield (R)-2,3-dihydroxy-isovalerate. In the isomerase reaction, S2AL is rearranged via a Mg-dependent methyl migration to produce 3-hydroxy-3-methyl-2-ketobutyrate (HMKB). In the reductase reaction, this 2-ketoacid undergoes a metal-dependent reduction by NADPH to yield (R)-2,3-dihydroxy-isovalerate. This is Ketol-acid reductoisomerase (NADP(+)) from Buchnera aphidicola subsp. Schizaphis graminum (strain Sg).